The following is a 185-amino-acid chain: uncharacterized protein (185 aa).

A chloroplast-targeting transit peptide spans methionine 1–asparagine 56. Residues arginine 48–asparagine 67 are disordered. Polar residues predominate over residues serine 52–serine 64. A coiled-coil region spans residues glutamine 105–glutamine 138.

The protein localises to the plastid. Its subcellular location is the chloroplast. It is found in the plastoglobule. This is an uncharacterized protein from Arabidopsis thaliana (Mouse-ear cress).